The following is a 607-amino-acid chain: Glutamine--fructose-6-phosphate aminotransferase [isomerizing] (607 aa).

Catalysis depends on Cys2, which acts as the Nucleophile; for GATase activity. A Glutamine amidotransferase type-2 domain is found at 2-217 (CGIVGIVGHS…DGDWAVVRRD (216 aa)). 2 consecutive SIS domains span residues 283 to 422 (LPFD…ARGV) and 455 to 597 (IARE…VDQP). Lys602 (for Fru-6P isomerization activity) is an active-site residue.

As to quaternary structure, homodimer.

Its subcellular location is the cytoplasm. It carries out the reaction D-fructose 6-phosphate + L-glutamine = D-glucosamine 6-phosphate + L-glutamate. In terms of biological role, catalyzes the first step in hexosamine metabolism, converting fructose-6P into glucosamine-6P using glutamine as a nitrogen source. The chain is Glutamine--fructose-6-phosphate aminotransferase [isomerizing] from Mesorhizobium japonicum (strain LMG 29417 / CECT 9101 / MAFF 303099) (Mesorhizobium loti (strain MAFF 303099)).